We begin with the raw amino-acid sequence, 837 residues long: MANILKTIIENDKGEIRRLEKMADKVFKYEDQMAALTDDQLKAKTVEFKERYQNGESLDSLLYEAFAVVREGAKRVLGLFPYKVQVMGGIVLHHGDVPEMRTGEGKTLTATMPVYLNALSGKGVHVVTVNEYLSERDATEMGELYSWLGLSVGINLATKSPMEKKEAYECDITYSTNSEIGFDYLRDNMVVRAENMVQRPLNYALVDEVDSILIDEARTPLIVSGANAVETSQLYHMADHYVKSLNKDDYIIDVQSKTIGLSDSGIDRAESYFKLENLYDIENVALTHFIDNALRANYIMLLDIDYVVSEEQEILIVDQFTGRTMEGRRYSDGLHQAIEAKEGVPIQDETKTSASITYQNLFRMYKKLSGMTGTGKTEEEEFREIYNIRVIPIPTNRPVQRIDHSDLLYASIESKFKAVVEDVKARYQKGQPVLVGTVAVETSDYISKKLVAAGVPHEVLNAKNHYREAQIIMNAGQRGAVTIATNMAGRGTDIKLGEGVRELGGLCVIGTERHESRRIDNQLRGRSGRQGDPGESQFYLSLEDDLMKRFGSERLKGIFERLNMSEEAIESRMLTRQVEAAQKRVEGNNHDTRKQVLQYDDVMREQREIIYAQRYDVITADRDLAPEIQAMIKRTIERVVDGHARAKQDEKLEAILNFAKYNLLPEDSITMEDLSGLSDKAIKEELFQRALKVYDSQVSKLRDEEAVKEFQKVLILRVVDNKWTDHIDALDQLRNAVGLRGYAQNNPVVEYQAEGFRMFNDMIGSIEFDVTRLMMKAQIHEQERPQAERHISTTATRNIAAHQASMPEDLDLNQIGRNELCPCGSGKKFKNCHGKRQ.

ATP contacts are provided by residues Gln85, 103–107 (GEGKT), and Asp493. Zn(2+) is bound by residues Cys821, Cys823, Cys832, and His833.

It belongs to the SecA family. As to quaternary structure, monomer and homodimer. Part of the essential Sec protein translocation apparatus which comprises SecA, SecYEG and auxiliary proteins SecDF. Other proteins may also be involved. It depends on Zn(2+) as a cofactor.

It localises to the cell membrane. It is found in the cytoplasm. It catalyses the reaction ATP + H2O + cellular proteinSide 1 = ADP + phosphate + cellular proteinSide 2.. Part of the Sec protein translocase complex. Interacts with the SecYEG preprotein conducting channel. Has a central role in coupling the hydrolysis of ATP to the transfer of proteins into and across the cell membrane, serving as an ATP-driven molecular motor driving the stepwise translocation of polypeptide chains across the membrane. This Streptococcus pneumoniae (strain ATCC BAA-255 / R6) protein is Protein translocase subunit SecA.